A 641-amino-acid chain; its full sequence is Threonine--tRNA ligase (641 aa).

The TGS domain maps to 1–61; it reads MIKINLLNHQ…TQDGDLEILA (61 aa). Residues 240–538 are catalytic; the sequence is DHKRLNKKLD…LIEENKGVFP (299 aa). Cysteine 334, histidine 385, and histidine 515 together coordinate Zn(2+).

It belongs to the class-II aminoacyl-tRNA synthetase family. As to quaternary structure, homodimer. Requires Zn(2+) as cofactor.

The protein localises to the cytoplasm. It catalyses the reaction tRNA(Thr) + L-threonine + ATP = L-threonyl-tRNA(Thr) + AMP + diphosphate + H(+). In terms of biological role, catalyzes the attachment of threonine to tRNA(Thr) in a two-step reaction: L-threonine is first activated by ATP to form Thr-AMP and then transferred to the acceptor end of tRNA(Thr). Also edits incorrectly charged L-seryl-tRNA(Thr). The protein is Threonine--tRNA ligase of Phytoplasma australiense.